The primary structure comprises 63 residues: Small ribosomal subunit protein eS31 (63 aa).

Zn(2+)-binding residues include Cys-31, Cys-34, Cys-50, and Cys-53.

This sequence belongs to the eukaryotic ribosomal protein eS31 family. In terms of assembly, part of the 30S ribosomal subunit. Requires Zn(2+) as cofactor.

The chain is Small ribosomal subunit protein eS31 (rps27ae) from Aeropyrum pernix (strain ATCC 700893 / DSM 11879 / JCM 9820 / NBRC 100138 / K1).